The following is a 395-amino-acid chain: MLRTQAARLICNSRVITAKRTFALATRAAAYSRPAARFVKPMITTRGLKQINFGGTVETVYERADWPREKLLDYFKNDTFALIGYGSQGYGQGLNLRDNGLNVIIGVRKDGASWKAAIEDGWVPGKNLFTVEDAIKRGSYVMNLLSDAAQSETWPAIKPLLTKGKTLYFSHGFSPVFKDLTHVEPPKDLDVILVAPKGSGRTVRSLFKEGRGINSSYAVWNDVTGKAHEKAQALAVAIGSGYVYQTTFEREVNSDLYGERGCLMGGIHGMFLAQYDVLRENGHSPSEAFNETVEEATQSLYPLIGKYGMDYMYDACSTTARRGALDWYPIFKNALKPVFQDLYESTKNGTETKRSLEFNSQPDYREKLEKELDTIRNMEIWKVGKEVRKLRPENQ.

The transit peptide at 1 to 47 (MLRTQAARLICNSRVITAKRTFALATRAAAYSRPAARFVKPMITTRG) directs the protein to the mitochondrion. One can recognise a KARI N-terminal Rossmann domain in the interval 57 to 246 (VETVYERADW…AIGSGYVYQT (190 aa)). NADP(+) contacts are provided by residues 84 to 93 (GYGSQGYGQG), 108 to 113 (RKDGAS), and 146 to 150 (SDAAQ). His-171 is a catalytic residue. One can recognise a KARI C-terminal knotted domain in the interval 247–394 (TFEREVNSDL…KEVRKLRPEN (148 aa)). Residues Asp-255, Glu-259, Glu-291, and Glu-295 each contribute to the Mg(2+) site. Ser-317 is a substrate binding site. Ser-355 bears the Phosphoserine mark. The tract at residues 363–395 (DYREKLEKELDTIRNMEIWKVGKEVRKLRPENQ) is hydrophilic.

This sequence belongs to the ketol-acid reductoisomerase family. Mg(2+) serves as cofactor.

Its subcellular location is the mitochondrion. It carries out the reaction (2R)-2,3-dihydroxy-3-methylbutanoate + NADP(+) = (2S)-2-acetolactate + NADPH + H(+). The enzyme catalyses (2R,3R)-2,3-dihydroxy-3-methylpentanoate + NADP(+) = (S)-2-ethyl-2-hydroxy-3-oxobutanoate + NADPH + H(+). It participates in amino-acid biosynthesis; L-isoleucine biosynthesis; L-isoleucine from 2-oxobutanoate: step 2/4. The protein operates within amino-acid biosynthesis; L-valine biosynthesis; L-valine from pyruvate: step 2/4. Involved in the biosynthesis of branched-chain amino acids (BCAA). Catalyzes the second common step in the parallel biosynthesis of isoleucine and valine. Converts alpha-aceto-alpha-hydroxybutyrate (AHB) to alpha,beta-dihydroxy-beta-methylvalerate (DHMV) and alpha-acetolactate (AL) to alpha,beta-dihydroxy-isovalerate (DHV) in isoleucine and valine biosynthesis, respectively. The chain is Ketol-acid reductoisomerase, mitochondrial from Saccharomyces cerevisiae (strain ATCC 204508 / S288c) (Baker's yeast).